The following is a 207-amino-acid chain: Large ribosomal subunit protein uL4 (207 aa).

Residues His-49 to Ile-78 are disordered. The span at Gly-60–Gly-71 shows a compositional bias: basic residues.

The protein belongs to the universal ribosomal protein uL4 family. In terms of assembly, part of the 50S ribosomal subunit.

In terms of biological role, one of the primary rRNA binding proteins, this protein initially binds near the 5'-end of the 23S rRNA. It is important during the early stages of 50S assembly. It makes multiple contacts with different domains of the 23S rRNA in the assembled 50S subunit and ribosome. Forms part of the polypeptide exit tunnel. The sequence is that of Large ribosomal subunit protein uL4 from Latilactobacillus sakei subsp. sakei (strain 23K) (Lactobacillus sakei subsp. sakei).